Reading from the N-terminus, the 744-residue chain is Potassium-transporting ATPase ATP-binding subunit (744 aa).

The next 4 helical transmembrane spans lie at 80–100 (PVMF…VMAL), 108–128 (AGFI…ANVA), 265–285 (LALT…TVTL), and 310–330 (VLVA…LSAI). The active-site 4-aspartylphosphate intermediate is Asp363. ATP contacts are provided by residues Asp400, Glu404, 435-442 (FSAQTRMS), and Lys457. Asp580 and Asp584 together coordinate Mg(2+). The next 3 membrane-spanning stretches (helical) occupy residues 650 to 670 (FAII…LNVM), 678 to 698 (AVMS…PLAL), and 724 to 744 (LLLP…MGWV).

Belongs to the cation transport ATPase (P-type) (TC 3.A.3) family. Type IA subfamily. As to quaternary structure, the system is composed of three essential subunits: KdpA, KdpB and KdpC.

It is found in the cell inner membrane. It catalyses the reaction K(+)(out) + ATP + H2O = K(+)(in) + ADP + phosphate + H(+). Its function is as follows. Part of the high-affinity ATP-driven potassium transport (or Kdp) system, which catalyzes the hydrolysis of ATP coupled with the electrogenic transport of potassium into the cytoplasm. This subunit is responsible for energy coupling to the transport system and for the release of the potassium ions to the cytoplasm. The polypeptide is Potassium-transporting ATPase ATP-binding subunit (Ralstonia nicotianae (strain ATCC BAA-1114 / GMI1000) (Ralstonia solanacearum)).